A 433-amino-acid chain; its full sequence is Steroid hormone receptor ERR2 (433 aa).

The segment at 1–41 (MSSEDRHLGSSCGSFIKTEPSSPSSGIDALSHHSPSGSSDA) is disordered. Residues 32 to 41 (HHSPSGSSDA) are compositionally biased toward low complexity. Residues 93-211 (YMLNAIPKRL…SPPAKKPLTK (119 aa)) are interaction with NANOG. The nuclear receptor DNA-binding region spans 100 to 186 (KRLCLVCGDI…RVRGGRQKYK (87 aa)). 2 consecutive NR C4-type zinc fingers follow at residues 103–123 (CLVCGDIASGYHYGVASCEAC) and 139–163 (CPATNECEITKRRRKSCQACRFMKC). An essential for ESRRB transcriptional activity and interaction with NCOA3 region spans residues 203-433 (PPAKKPLTKI…LFLEMLEAKV (231 aa)). The NR LBD domain maps to 208-432 (PLTKIVSYLL…KLFLEMLEAK (225 aa)).

The protein belongs to the nuclear hormone receptor family. NR3 subfamily. As to quaternary structure, binds DNA as a monomer. Interacts with NR0B1; represses ESRRB activity at the GATA6 promoter. Interacts with NANOG; reciprocally modulates their transcriptional activities and activates POU5F1 expression. Interacts with NCOA3; mediates the interaction between ESRRB and RNA polymerase II complexes and allows NCOA3 corecruitment to ESRRB, KLF4, NANOG, and SOX2 enhancer regions to trigger ESRRB-dependent gene activation involved in self-renewal and pluripotency. Interacts with KDM1A; co-occupes the core set of ESRRB targets including ELF5 and EOMES. Interacts with the multiprotein complex Integrator, at least composed of INTS1, INTS2, INTS3, INTS4, INTS5, INTS6, INTS7, INTS8, INTS9/RC74, INTS10, INTS11/CPSF3L and INTS12; ESRRB is probably not a core component of the integrator complex and associates to integrator via its interaction with INTS1 and INTS9; attracts the transcriptional machinery. Interacts with JARID2. Interacts with POU5F1; recruits ESRRB near the POU5F1-SOX2 element in the NANOG proximal promoter leading to activation of NANOG expression; the interaction is DNA independent. In terms of processing, acetylated by PCAF/KAT2 (in vitro).

It is found in the nucleus. The protein localises to the cytoplasm. It localises to the chromosome. Transcription factor that binds a canonical ESRRB recognition (ERRE) sequence 5'TCAAGGTCA-3' localized on promoter and enhancer of targets genes regulating their expression or their transcription activity. Plays a role, in a LIF independent manner, in maintainance of self-renewal and pluripotency of embryonic and trophoblast stem cells through different signaling pathways including FGF signaling pathway and Wnt signaling pathways. Involved in morula development (2-16 cells embryos) by acting as a regulator at the 8-cell stage. Upon FGF signaling pathway activation, interacts with KDM1A by directly binding to enhancer site of ELF5 and EOMES and activating their transcription leading to self-renewal of trophoblast stem cells. Also regulates expression of multiple rod-specific genes and is required for survival of this cell type. Plays a role as transcription factor activator of GATA6, NR0B1, POU5F1 and PERM1. Plays a role as transcription factor repressor of NFE2L2 transcriptional activity and ESR1 transcriptional activity. During mitosis remains bound to a subset of interphase target genes, including pluripotency regulators, through the canonical ESRRB recognition (ERRE) sequence, leading to their transcriptional activation in early G1 phase. Can coassemble on structured DNA elements with other transcription factors like SOX2, POU5F1, KDM1A and NCOA3 to trigger ESRRB-dependent gene activation. This mechanism, in the case of SOX2 corecruitment prevents the embryonic stem cells (ESCs) to epiblast stem cells (EpiSC) transition through positive regulation of NR0B1 that inhibits the EpiSC transcriptional program. Also plays a role inner ear development by controlling expression of ion channels and transporters and in early placentation. The polypeptide is Steroid hormone receptor ERR2 (Rattus norvegicus (Rat)).